Consider the following 100-residue polypeptide: Aspartyl/glutamyl-tRNA(Asn/Gln) amidotransferase subunit C (100 aa).

It belongs to the GatC family. Heterotrimer of A, B and C subunits.

It carries out the reaction L-glutamyl-tRNA(Gln) + L-glutamine + ATP + H2O = L-glutaminyl-tRNA(Gln) + L-glutamate + ADP + phosphate + H(+). The catalysed reaction is L-aspartyl-tRNA(Asn) + L-glutamine + ATP + H2O = L-asparaginyl-tRNA(Asn) + L-glutamate + ADP + phosphate + 2 H(+). Its function is as follows. Allows the formation of correctly charged Asn-tRNA(Asn) or Gln-tRNA(Gln) through the transamidation of misacylated Asp-tRNA(Asn) or Glu-tRNA(Gln) in organisms which lack either or both of asparaginyl-tRNA or glutaminyl-tRNA synthetases. The reaction takes place in the presence of glutamine and ATP through an activated phospho-Asp-tRNA(Asn) or phospho-Glu-tRNA(Gln). The chain is Aspartyl/glutamyl-tRNA(Asn/Gln) amidotransferase subunit C from Novosphingobium aromaticivorans (strain ATCC 700278 / DSM 12444 / CCUG 56034 / CIP 105152 / NBRC 16084 / F199).